The following is a 367-amino-acid chain: Protein RecA (367 aa).

73–80 (GPESSGKT) is an ATP binding site. The interval 345-367 (DEPVAKKASAKESKEAKELKEVE) is disordered.

This sequence belongs to the RecA family.

The protein localises to the cytoplasm. Functionally, can catalyze the hydrolysis of ATP in the presence of single-stranded DNA, the ATP-dependent uptake of single-stranded DNA by duplex DNA, and the ATP-dependent hybridization of homologous single-stranded DNAs. It interacts with LexA causing its activation and leading to its autocatalytic cleavage. The protein is Protein RecA of Janthinobacterium sp. (strain Marseille) (Minibacterium massiliensis).